Here is a 493-residue protein sequence, read N- to C-terminus: Alpha-amylase-related protein (493 aa).

A signal peptide spans 1 to 19 (MFKFALTLTLCLAGSLSLA). Q20 is subject to Pyrrolidone carboxylic acid. An intrachain disulfide couples C47 to C103. 3 residues coordinate Ca(2+): N117, Q168, and D177. Residues C156 and C170 are joined by a disulfide bond. Residue R205 coordinates chloride. D207 acts as the Nucleophile in catalysis. Residue H211 participates in Ca(2+) binding. The Proton donor role is filled by E244. Positions 307 and 342 each coordinate chloride. 3 disulfides stabilise this stretch: C375/C381, C417/C440, and C447/C459.

The protein belongs to the glycosyl hydrolase 13 family. In terms of assembly, monomer. The cofactor is Ca(2+). Chloride serves as cofactor.

It is found in the secreted. The enzyme catalyses Endohydrolysis of (1-&gt;4)-alpha-D-glucosidic linkages in polysaccharides containing three or more (1-&gt;4)-alpha-linked D-glucose units.. The polypeptide is Alpha-amylase-related protein (Amyrel) (Drosophila sechellia (Fruit fly)).